Reading from the N-terminus, the 635-residue chain is Biosynthetic arginine decarboxylase (635 aa).

Residue Lys-100 is modified to N6-(pyridoxal phosphate)lysine. A substrate-binding site is contributed by 282–292 (LDIGGGLGVDY).

Belongs to the Orn/Lys/Arg decarboxylase class-II family. SpeA subfamily. Mg(2+) is required as a cofactor. Pyridoxal 5'-phosphate serves as cofactor.

The catalysed reaction is L-arginine + H(+) = agmatine + CO2. It participates in amine and polyamine biosynthesis; agmatine biosynthesis; agmatine from L-arginine: step 1/1. In terms of biological role, catalyzes the biosynthesis of agmatine from arginine. The polypeptide is Biosynthetic arginine decarboxylase (Geobacter sp. (strain M21)).